The chain runs to 291 residues: Sulfotransferase 1A1 (291 aa).

Residue 44-49 (KSGTNW) participates in 3'-phosphoadenylyl sulfate binding. A substrate-binding site is contributed by 102 to 104 (KTH). Histidine 104 functions as the Proton acceptor in the catalytic mechanism. Residues arginine 126, serine 134, tyrosine 189, 223 to 228 (TSFKKM), and 251 to 255 (FMRKG) contribute to the 3'-phosphoadenylyl sulfate site. A Phosphoserine modification is found at serine 134.

This sequence belongs to the sulfotransferase 1 family. In terms of assembly, homodimer. In terms of tissue distribution, expressed in brain, colon, liver, and small intestine of mice colonized with B.ovatus and L.plantarum.

The protein resides in the cytoplasm. It carries out the reaction a phenol + 3'-phosphoadenylyl sulfate = an aryl sulfate + adenosine 3',5'-bisphosphate + H(+). It catalyses the reaction 17beta-estradiol + 3'-phosphoadenylyl sulfate = 17beta-estradiol 3-sulfate + adenosine 3',5'-bisphosphate + H(+). The enzyme catalyses 4-ethylphenol + 3'-phosphoadenylyl sulfate = 4-ethylphenyl sulfate + adenosine 3',5'-bisphosphate + H(+). The catalysed reaction is 4-nitrophenol + 3'-phosphoadenylyl sulfate = 4-nitrophenyl sulfate + adenosine 3',5'-bisphosphate. It carries out the reaction dopamine + 3'-phosphoadenylyl sulfate = dopamine 3-O-sulfate + adenosine 3',5'-bisphosphate + H(+). It catalyses the reaction dopamine + 3'-phosphoadenylyl sulfate = dopamine 4-O-sulfate + adenosine 3',5'-bisphosphate + H(+). The enzyme catalyses 3,3',5-triiodo-L-thyronine + 3'-phosphoadenylyl sulfate = 3,3',5-triiodo-L-thyronine sulfate + adenosine 3',5'-bisphosphate + H(+). The catalysed reaction is 3,3',5'-triiodo-L-thyronine + 3'-phosphoadenylyl sulfate = 3,3',5'-triiodo-L-thyronine sulfate + adenosine 3',5'-bisphosphate + H(+). It carries out the reaction 3,3'-diiodo-L-thyronine + 3'-phosphoadenylyl sulfate = 3,3'-diiodo-L-thyronine sulfate + adenosine 3',5'-bisphosphate + H(+). It catalyses the reaction L-thyroxine + 3'-phosphoadenylyl sulfate = L-thyroxine sulfate + adenosine 3',5'-bisphosphate + H(+). In terms of biological role, sulfotransferase that utilizes 3'-phospho-5'-adenylyl sulfate (PAPS) as sulfonate donor to catalyze the sulfate conjugation of a wide variety of acceptor molecules bearing a hydroxyl or an amine group. Sulfonation increases the water solubility of most compounds, and therefore their renal excretion, but it can also result in bioactivation to form active metabolites. Displays broad substrate specificity for small phenolic compounds. Plays an important role in the sulfonation of endogenous molecules such as steroid hormones. Mediates also the metabolic activation of carcinogenic N-hydroxyarylamines leading to highly reactive intermediates capable of forming DNA adducts, potentially resulting in mutagenesis. May play a role in gut microbiota-host metabolic interaction. O-sulfonates 4-ethylphenol (4-EP), a dietary tyrosine-derived metabolite produced by gut bacteria. The product 4-EPS crosses the blood-brain barrier and may negatively regulate oligodendrocyte maturation and myelination, affecting the functional connectivity of different brain regions associated with the limbic system. Catalyzes the sulfate conjugation of dopamine. Catalyzes the sulfation of T4 (L-thyroxine/3,5,3',5'-tetraiodothyronine), T3 (3,5,3'-triiodothyronine), rT3 (3,3',5'-triiodothyronine) and 3,3'-T2 (3,3'-diiodothyronine), with a substrate preference of 3,3'-T2 &gt; rT3 &gt; T3 &gt; T4. The polypeptide is Sulfotransferase 1A1 (Sult1a1) (Mus musculus (Mouse)).